Consider the following 592-residue polypeptide: Craniofacial development protein 2 (592 aa).

The segment covering 1-16 (MEEFDSKDISTSKDED) has biased composition (basic and acidic residues). Disordered regions lie at residues 1-225 (MEEF…KGQS) and 499-592 (VTNE…DCNN). Residues 25–42 (HEDDINELVKEDEVDGEE) are compositionally biased toward acidic residues. Composition is skewed to basic and acidic residues over residues 78–108 (SRES…RQEE) and 147–162 (KVEE…EVKL). Polar residues predominate over residues 175–184 (LTQQGRLSGR). Composition is skewed to basic and acidic residues over residues 185-207 (TSED…RRAD), 508-523 (EEAK…EKPE), 552-562 (SVFKQDEKDKP), and 580-592 (EKCD…DCNN). Residues 499–578 (VTNEEDATNE…SVPSLPAGSG (80 aa)) are hydrophilic.

In terms of processing, phosphorylated by CK2 (casein kinase II) in vitro. As to expression, expressed in liver and lung with higher expression in brain.

It localises to the cytoplasm. The protein resides in the nucleus. The polypeptide is Craniofacial development protein 2 (CFDP2) (Bos taurus (Bovine)).